Consider the following 568-residue polypeptide: 2-isopropylmalate synthase (568 aa).

The 277-residue stretch at 37–313 folds into the Pyruvate carboxyltransferase domain; sequence PRWLSTDLRD…DPMIDFSNID (277 aa). Positions 46, 252, 254, and 288 each coordinate Mg(2+). The regulatory domain stretch occupies residues 455–568; the sequence is EGVVGVMAYR…CSAVNRAQQS (114 aa).

This sequence belongs to the alpha-IPM synthase/homocitrate synthase family. LeuA type 2 subfamily. In terms of assembly, homodimer. Mg(2+) is required as a cofactor.

It is found in the cytoplasm. It carries out the reaction 3-methyl-2-oxobutanoate + acetyl-CoA + H2O = (2S)-2-isopropylmalate + CoA + H(+). The protein operates within amino-acid biosynthesis; L-leucine biosynthesis; L-leucine from 3-methyl-2-oxobutanoate: step 1/4. In terms of biological role, catalyzes the condensation of the acetyl group of acetyl-CoA with 3-methyl-2-oxobutanoate (2-ketoisovalerate) to form 3-carboxy-3-hydroxy-4-methylpentanoate (2-isopropylmalate). The chain is 2-isopropylmalate synthase from Thermobifida fusca (strain YX).